The sequence spans 546 residues: Amidase FG08078 (546 aa).

Catalysis depends on charge relay system residues Lys129 and Ser204. Catalysis depends on Ser228, which acts as the Acyl-ester intermediate.

Belongs to the amidase family.

The protein operates within mycotoxin biosynthesis. Functionally, amidase; part of the gene cluster that mediates the biosynthesis of butenolide, a mycotoxin that shows antibiotic activity but does not seem to play a major role in the spread of head blight in wheat. Butenolide is derived from glutamic acid via a 4-acetamido-2-butenoic acid intermediate. The predicted function of the NADH:flavin oxidoreductase FG08077, the cytochrome P450 monooxygenase FG08079, the decarboxylase FG08083, and the putative acetyltransferase FG08082 are consistent with this pathway, however, the respective activities of the butelonide biosynthesis cluster enzymes have still to be experimentally determined. This chain is Amidase FG08078, found in Gibberella zeae (strain ATCC MYA-4620 / CBS 123657 / FGSC 9075 / NRRL 31084 / PH-1) (Wheat head blight fungus).